Here is an 847-residue protein sequence, read N- to C-terminus: FAST kinase domain-containing protein 1, mitochondrial (847 aa).

Position 360 is an N6-acetyllysine (K360). The RAP domain occupies 777–837 (IALEFLDSKA…KDARMDYLRE (61 aa)).

This sequence belongs to the FAST kinase family. Expression detected in spleen, thymus, testis, ovary, colon, heart, smooth muscle, kidney, brain, lung, liver and white adipose tissue with highest expression in heart.

It localises to the mitochondrion. In terms of biological role, involved in the down-regulation of mitochondrial MT-ND3 mRNA levels which leads to decreased respiratory complex I abundance and activity. In Homo sapiens (Human), this protein is FAST kinase domain-containing protein 1, mitochondrial (FASTKD1).